We begin with the raw amino-acid sequence, 345 residues long: MEGVYFNIDNGFIEGVVRGYRNGLLSNNQYINLTQCDTLEDLKLQLSSTDYGNFLSSVSSESLTTSLIQEYASSKLYHEFNYIRDQSSGSTRKFMDYITYGYMIDNVALMITGTIHDRDKGEILQRCHPLGWFDTLPTLSVATDLESLYETVLVDTPLAPYFKNCFDTAEELDDMNIEIIRNKLYKAYLEDFYNFVTEEIPEPAKECMQTLLGFEADRRSINIALNSLQSSDIDPDLKSDLLPNIGKLYPLATFHLAQAQDFEGVRAALANVYEYRGFLETGNLEDHFYQLEMELCRDAFTQQFAISTVWAWMKSKEQEVRNITWIAECIAQNQRERINNYISVY.

N-acetylmethionine is present on methionine 1.

It belongs to the V-ATPase V0D/AC39 subunit family. In terms of assembly, V-ATPase is a heteromultimeric enzyme composed of a peripheral catalytic V1 complex (components A to H) attached to an integral membrane V0 proton pore complex (components: a, c, c', c'', d, e, f and VOA1).

It localises to the vacuole membrane. Functionally, subunit of the V0 complex of vacuolar(H+)-ATPase (V-ATPase), a multisubunit enzyme composed of a peripheral complex (V1) that hydrolyzes ATP and a membrane integral complex (V0) that translocates protons. V-ATPase is responsible for acidifying and maintaining the pH of intracellular compartments. This subunit is a non-integral membrane component of the membrane pore domain and is required for proper assembly of the V0 sector. Might be involved in the regulated assembly of V1 subunits onto the membrane sector or alternatively may prevent the passage of protons through V0 pores. In Saccharomyces cerevisiae (strain ATCC 204508 / S288c) (Baker's yeast), this protein is V-type proton ATPase subunit d.